The primary structure comprises 494 residues: Probable cytosol aminopeptidase (494 aa).

Lys260 and Asp265 together coordinate Mn(2+). Lys272 is a catalytic residue. Residues Asp283, Asp342, and Glu344 each contribute to the Mn(2+) site. Arg346 is an active-site residue.

The protein belongs to the peptidase M17 family. The cofactor is Mn(2+).

The protein localises to the cytoplasm. It catalyses the reaction Release of an N-terminal amino acid, Xaa-|-Yaa-, in which Xaa is preferably Leu, but may be other amino acids including Pro although not Arg or Lys, and Yaa may be Pro. Amino acid amides and methyl esters are also readily hydrolyzed, but rates on arylamides are exceedingly low.. The catalysed reaction is Release of an N-terminal amino acid, preferentially leucine, but not glutamic or aspartic acids.. Functionally, presumably involved in the processing and regular turnover of intracellular proteins. Catalyzes the removal of unsubstituted N-terminal amino acids from various peptides. The sequence is that of Probable cytosol aminopeptidase from Bacillus thuringiensis (strain Al Hakam).